A 124-amino-acid polypeptide reads, in one-letter code: Protein TAR1 (124 aa).

Residues Lys80 to Ile124 are disordered. Polar residues predominate over residues Pro111 to Ile124.

The protein resides in the mitochondrion. Functionally, may be involved in mtDNA stability or mitochondrial gene expression regulation at the post-transcriptional level. The chain is Protein TAR1 (TAR1) from Saccharomyces cerevisiae (strain ATCC 204508 / S288c) (Baker's yeast).